The primary structure comprises 283 residues: NAD kinase (283 aa).

D73 serves as the catalytic Proton acceptor. NAD(+) contacts are provided by residues 73-74 (DG), 146-147 (NE), H157, H176, D178, 189-194 (TAYNLS), and A213.

The protein belongs to the NAD kinase family. It depends on a divalent metal cation as a cofactor.

The protein resides in the cytoplasm. The catalysed reaction is NAD(+) + ATP = ADP + NADP(+) + H(+). In terms of biological role, involved in the regulation of the intracellular balance of NAD and NADP, and is a key enzyme in the biosynthesis of NADP. Catalyzes specifically the phosphorylation on 2'-hydroxyl of the adenosine moiety of NAD to yield NADP. The chain is NAD kinase from Haloarcula marismortui (strain ATCC 43049 / DSM 3752 / JCM 8966 / VKM B-1809) (Halobacterium marismortui).